The chain runs to 424 residues: Serine--tRNA ligase (424 aa).

233-235 (TAE) provides a ligand contact to L-serine. 264–266 (RRE) provides a ligand contact to ATP. Glu-287 contacts L-serine. 351–354 (EISS) is an ATP binding site. Residue Ser-387 coordinates L-serine.

Belongs to the class-II aminoacyl-tRNA synthetase family. Type-1 seryl-tRNA synthetase subfamily. In terms of assembly, homodimer. The tRNA molecule binds across the dimer.

It localises to the cytoplasm. The catalysed reaction is tRNA(Ser) + L-serine + ATP = L-seryl-tRNA(Ser) + AMP + diphosphate + H(+). It catalyses the reaction tRNA(Sec) + L-serine + ATP = L-seryl-tRNA(Sec) + AMP + diphosphate + H(+). Its pathway is aminoacyl-tRNA biosynthesis; selenocysteinyl-tRNA(Sec) biosynthesis; L-seryl-tRNA(Sec) from L-serine and tRNA(Sec): step 1/1. In terms of biological role, catalyzes the attachment of serine to tRNA(Ser). Is also able to aminoacylate tRNA(Sec) with serine, to form the misacylated tRNA L-seryl-tRNA(Sec), which will be further converted into selenocysteinyl-tRNA(Sec). The protein is Serine--tRNA ligase of Acaryochloris marina (strain MBIC 11017).